A 204-amino-acid polypeptide reads, in one-letter code: Peptide deformylase (204 aa).

Residues Cys131 and His174 each coordinate Fe cation. Glu175 is an active-site residue. His178 contributes to the Fe cation binding site.

This sequence belongs to the polypeptide deformylase family. The cofactor is Fe(2+).

The enzyme catalyses N-terminal N-formyl-L-methionyl-[peptide] + H2O = N-terminal L-methionyl-[peptide] + formate. Removes the formyl group from the N-terminal Met of newly synthesized proteins. Requires at least a dipeptide for an efficient rate of reaction. N-terminal L-methionine is a prerequisite for activity but the enzyme has broad specificity at other positions. This chain is Peptide deformylase, found in Streptococcus equi subsp. zooepidemicus (strain H70).